Reading from the N-terminus, the 133-residue chain is Large ribosomal subunit protein bL12 (133 aa).

Belongs to the bacterial ribosomal protein bL12 family. As to quaternary structure, homodimer. Part of the ribosomal stalk of the 50S ribosomal subunit. Forms a multimeric L10(L12)X complex, where L10 forms an elongated spine to which 2 to 4 L12 dimers bind in a sequential fashion. Binds GTP-bound translation factors.

Its function is as follows. Forms part of the ribosomal stalk which helps the ribosome interact with GTP-bound translation factors. Is thus essential for accurate translation. The sequence is that of Large ribosomal subunit protein bL12 from Ehrlichia chaffeensis (strain ATCC CRL-10679 / Arkansas).